Consider the following 748-residue polypeptide: Semaphorin-3B (748 aa).

The signal sequence occupies residues 1 to 25 (MGRAEAAAMIPGLALLWVAGLGDTA). The Sema domain occupies 30–512 (RLRLSFQELQ…SRSAVAQIAL (483 aa)). N-linked (GlcNAc...) asparagine glycosylation occurs at Asn82. The cysteines at positions 102 and 113 are disulfide-linked. N-linked (GlcNAc...) asparagine glycosylation is present at Asn124. 5 disulfides stabilise this stretch: Cys131–Cys140, Cys268–Cys379, Cys292–Cys339, Cys515–Cys533, and Cys643–Cys709. Residues 561–659 (PSTLCSGDSS…FSQPLRRLVL (99 aa)) enclose the Ig-like C2-type domain. Residues 708–748 (MCRPQPGHHSVAADSRRKGRNRRMHVSELRAERGPRSAAHW) are disordered. Basic and acidic residues predominate over residues 732–742 (HVSELRAERGP).

It belongs to the semaphorin family.

It is found in the secreted. Functionally, inhibits axonal extension by providing local signals to specify territories inaccessible for growing axons. The polypeptide is Semaphorin-3B (Sema3b) (Mus musculus (Mouse)).